We begin with the raw amino-acid sequence, 291 residues long: DNA repair protein RecO (291 aa).

The protein belongs to the RecO family.

In terms of biological role, involved in DNA repair and RecF pathway recombination. In Cupriavidus pinatubonensis (strain JMP 134 / LMG 1197) (Cupriavidus necator (strain JMP 134)), this protein is DNA repair protein RecO.